The primary structure comprises 415 residues: Serine hydroxymethyltransferase (415 aa).

(6S)-5,6,7,8-tetrahydrofolate is bound by residues Leu115 and Gly119 to Leu121. An N6-(pyridoxal phosphate)lysine modification is found at Lys224. Position 348 to 350 (Ser348 to Phe350) interacts with (6S)-5,6,7,8-tetrahydrofolate.

It belongs to the SHMT family. In terms of assembly, homodimer. Pyridoxal 5'-phosphate serves as cofactor.

It localises to the cytoplasm. It carries out the reaction (6R)-5,10-methylene-5,6,7,8-tetrahydrofolate + glycine + H2O = (6S)-5,6,7,8-tetrahydrofolate + L-serine. It participates in one-carbon metabolism; tetrahydrofolate interconversion. Its pathway is amino-acid biosynthesis; glycine biosynthesis; glycine from L-serine: step 1/1. Catalyzes the reversible interconversion of serine and glycine with tetrahydrofolate (THF) serving as the one-carbon carrier. This reaction serves as the major source of one-carbon groups required for the biosynthesis of purines, thymidylate, methionine, and other important biomolecules. Also exhibits THF-independent aldolase activity toward beta-hydroxyamino acids, producing glycine and aldehydes, via a retro-aldol mechanism. The sequence is that of Serine hydroxymethyltransferase from Latilactobacillus sakei subsp. sakei (strain 23K) (Lactobacillus sakei subsp. sakei).